The following is a 369-amino-acid chain: Anhydro-N-acetylmuramic acid kinase (369 aa).

12–19 contacts ATP; sequence GTSMDGVD.

Belongs to the anhydro-N-acetylmuramic acid kinase family.

The catalysed reaction is 1,6-anhydro-N-acetyl-beta-muramate + ATP + H2O = N-acetyl-D-muramate 6-phosphate + ADP + H(+). Its pathway is amino-sugar metabolism; 1,6-anhydro-N-acetylmuramate degradation. It functions in the pathway cell wall biogenesis; peptidoglycan recycling. Catalyzes the specific phosphorylation of 1,6-anhydro-N-acetylmuramic acid (anhMurNAc) with the simultaneous cleavage of the 1,6-anhydro ring, generating MurNAc-6-P. Is required for the utilization of anhMurNAc either imported from the medium or derived from its own cell wall murein, and thus plays a role in cell wall recycling. The protein is Anhydro-N-acetylmuramic acid kinase of Shewanella putrefaciens (strain CN-32 / ATCC BAA-453).